Here is a 427-residue protein sequence, read N- to C-terminus: Serine--tRNA ligase (427 aa).

Position 231–233 (231–233) interacts with L-serine; the sequence is TAE. 262–264 serves as a coordination point for ATP; the sequence is RSE. Glu285 serves as a coordination point for L-serine. 349–352 is a binding site for ATP; that stretch reads EISS. Ser385 lines the L-serine pocket.

This sequence belongs to the class-II aminoacyl-tRNA synthetase family. Type-1 seryl-tRNA synthetase subfamily. In terms of assembly, homodimer. The tRNA molecule binds across the dimer.

It is found in the cytoplasm. It carries out the reaction tRNA(Ser) + L-serine + ATP = L-seryl-tRNA(Ser) + AMP + diphosphate + H(+). The catalysed reaction is tRNA(Sec) + L-serine + ATP = L-seryl-tRNA(Sec) + AMP + diphosphate + H(+). The protein operates within aminoacyl-tRNA biosynthesis; selenocysteinyl-tRNA(Sec) biosynthesis; L-seryl-tRNA(Sec) from L-serine and tRNA(Sec): step 1/1. Catalyzes the attachment of serine to tRNA(Ser). Is also able to aminoacylate tRNA(Sec) with serine, to form the misacylated tRNA L-seryl-tRNA(Sec), which will be further converted into selenocysteinyl-tRNA(Sec). This chain is Serine--tRNA ligase, found in Staphylococcus saprophyticus subsp. saprophyticus (strain ATCC 15305 / DSM 20229 / NCIMB 8711 / NCTC 7292 / S-41).